Reading from the N-terminus, the 1781-residue chain is BCL-6 corepressor-like protein 1 (1781 aa).

Disordered regions lie at residues 64–136 and 337–362; these read AVGS…SHSR and ASTP…GPPS. Polar residues-rich tracts occupy residues 66-82 and 127-136; these read GSGS…NTTE and PDSTEASHSR. The residue at position 490 (S490) is a Phosphoserine. Positions 521-531 are enriched in low complexity; it reads SCTSPSSSTNS. 5 disordered regions span residues 521-545, 561-616, 733-777, 869-895, and 933-960; these read SCTS…LADT, LLPA…EMPL, NRDP…STVK, PLGS…PEQD, and QPSS…TPKM. Positions 581-594 are enriched in polar residues; the sequence is TDQQTEGTSVTFSP. A phosphoserine mark is found at S593 and S607. A Glycyl lysine isopeptide (Lys-Gly) (interchain with G-Cter in SUMO2) cross-link involves residue K741. S1024 bears the Phosphoserine mark. K1087 participates in a covalent cross-link: Glycyl lysine isopeptide (Lys-Gly) (interchain with G-Cter in SUMO2). Positions 1100-1484 are disordered; that stretch reads WQPDEETESL…PTARQIPPEA (385 aa). Over residues 1116 to 1127 the composition is skewed to basic and acidic residues; sequence CNKEKEIEEEPR. S1162 carries the post-translational modification Phosphoserine. Positions 1176 to 1185 are enriched in basic residues; the sequence is VRGKHKHRKP. The segment covering 1195–1213 has biased composition (basic and acidic residues); it reads KRTDGHEEGSLEKKAKNSF. Residues 1222–1234 show a composition bias toward polar residues; the sequence is STRTRSQSGSICS. Composition is skewed to basic and acidic residues over residues 1271 to 1284 and 1297 to 1307; these read TQRD…HAQD and RAREMPWRTEA. The segment covering 1314–1324 has biased composition (acidic residues); that stretch reads TNEEEEDDEEE. Residues 1328–1339 show a composition bias toward basic residues; the sequence is KRKKRRRQKSRK. Over residues 1350–1362 the composition is skewed to basic and acidic residues; sequence EEQRRKGRADSKA. 2 stretches are compositionally biased toward polar residues: residues 1381 to 1394 and 1437 to 1449; these read LLLS…SDSP and RWSQ…SKSP. ANK repeat units lie at residues 1493–1523, 1527–1556, and 1560–1589; these read AGET…DVNH, AGYT…NVNC, and DGTR…DPTL. The PCGF Ub-like fold domain (PUFD); required for the interaction with the KDM2B-SKP1 heterodimeric complex stretch occupies residues 1664–1781; it reads DDFMFELSDK…SEVEYQSWSS (118 aa).

Belongs to the BCOR family. In terms of assembly, interacts with PCGF1, forming heterodimers. The PCGF1-BCORL1 heterodimeric complex interacts with the KDM2B-SKP1 heterodimeric complex to form a homotetrameric polycomb repression complex 1 (PRC1.1). Interacts with SKP1. Interacts with CTBP1, HDAC4, HDAC5 and HDAC7. As to expression, highly expressed in lung and testis.

It is found in the nucleus. Functionally, transcriptional corepressor. May specifically inhibit gene expression when recruited to promoter regions by sequence specific DNA-binding proteins such as BCL6. This repression may be mediated at least in part by histone deacetylase activities which can associate with this corepressor. This chain is BCL-6 corepressor-like protein 1 (Bcorl1), found in Mus musculus (Mouse).